A 692-amino-acid chain; its full sequence is Putative receptor-like protein kinase At1g80870 (692 aa).

A helical transmembrane segment spans residues 20–40 (LFLILTISSSLVIFFAILYFI). Positions 81 to 673 (FDESNVIGKG…GEMDISSTAF (593 aa)) constitute a Protein kinase domain. Residues 87-95 (IGKGGSGTV) and Lys109 each bind ATP. Asp206 functions as the Proton acceptor in the catalytic mechanism. Disordered stretches follow at residues 427-446 (EISERKNKRSKNKKKKHRNM) and 511-533 (RRKSNSSSKKKKKNNNGSMGSEM). Composition is skewed to basic residues over residues 432 to 444 (KNKRSKNKKKKHR) and 511 to 524 (RRKSNSSSKKKKKN).

Belongs to the protein kinase superfamily. Ser/Thr protein kinase family.

It localises to the cell membrane. The catalysed reaction is L-seryl-[protein] + ATP = O-phospho-L-seryl-[protein] + ADP + H(+). The enzyme catalyses L-threonyl-[protein] + ATP = O-phospho-L-threonyl-[protein] + ADP + H(+). The sequence is that of Putative receptor-like protein kinase At1g80870 from Arabidopsis thaliana (Mouse-ear cress).